The chain runs to 340 residues: GTP 3',8-cyclase (340 aa).

Residues 8–230 (KLGRPIRDLR…EQHFEIDPVE (223 aa)) form the Radical SAM core domain. R17 contacts GTP. Residues C24 and C28 each contribute to the [4Fe-4S] cluster site. Residue Y30 coordinates S-adenosyl-L-methionine. C31 is a binding site for [4Fe-4S] cluster. R71 serves as a coordination point for GTP. G75 contacts S-adenosyl-L-methionine. A GTP-binding site is contributed by T102. S126 lines the S-adenosyl-L-methionine pocket. GTP is bound at residue K163. M197 serves as a coordination point for S-adenosyl-L-methionine. [4Fe-4S] cluster is bound by residues C261 and C264. GTP is bound at residue 266–268 (RAR). A [4Fe-4S] cluster-binding site is contributed by C278.

The protein belongs to the radical SAM superfamily. MoaA family. As to quaternary structure, monomer and homodimer. [4Fe-4S] cluster is required as a cofactor.

It carries out the reaction GTP + AH2 + S-adenosyl-L-methionine = (8S)-3',8-cyclo-7,8-dihydroguanosine 5'-triphosphate + 5'-deoxyadenosine + L-methionine + A + H(+). It functions in the pathway cofactor biosynthesis; molybdopterin biosynthesis. Its function is as follows. Catalyzes the cyclization of GTP to (8S)-3',8-cyclo-7,8-dihydroguanosine 5'-triphosphate. This is GTP 3',8-cyclase from Staphylococcus aureus (strain bovine RF122 / ET3-1).